The sequence spans 201 residues: Pyrrolidone-carboxylate peptidase (201 aa).

Active-site residues include glutamate 78, cysteine 141, and histidine 165.

This sequence belongs to the peptidase C15 family. As to quaternary structure, homotetramer.

It localises to the cytoplasm. It carries out the reaction Release of an N-terminal pyroglutamyl group from a polypeptide, the second amino acid generally not being Pro.. Functionally, removes 5-oxoproline from various penultimate amino acid residues except L-proline. The polypeptide is Pyrrolidone-carboxylate peptidase (Brachyspira hyodysenteriae (strain ATCC 49526 / WA1)).